Reading from the N-terminus, the 142-residue chain is FAD synthase (142 aa).

ATP contacts are provided by residues 9–10 (TF), 14–17 (HPGH), and aspartate 92.

This sequence belongs to the archaeal FAD synthase family. As to quaternary structure, homodimer. A divalent metal cation serves as cofactor.

The enzyme catalyses FMN + ATP + H(+) = FAD + diphosphate. It functions in the pathway cofactor biosynthesis; FAD biosynthesis; FAD from FMN: step 1/1. Functionally, catalyzes the transfer of the AMP portion of ATP to flavin mononucleotide (FMN) to produce flavin adenine dinucleotide (FAD) coenzyme. The sequence is that of FAD synthase from Haloferax volcanii (strain ATCC 29605 / DSM 3757 / JCM 8879 / NBRC 14742 / NCIMB 2012 / VKM B-1768 / DS2) (Halobacterium volcanii).